Here is a 355-residue protein sequence, read N- to C-terminus: tRNA uridine(34) hydroxylase (355 aa).

The 95-residue stretch at 146–240 (DDPDTVFVDM…YARQAKAQGL (95 aa)) folds into the Rhodanese domain. The active-site Cysteine persulfide intermediate is the Cys200.

Belongs to the TrhO family.

The catalysed reaction is uridine(34) in tRNA + AH2 + O2 = 5-hydroxyuridine(34) in tRNA + A + H2O. Its function is as follows. Catalyzes oxygen-dependent 5-hydroxyuridine (ho5U) modification at position 34 in tRNAs. The polypeptide is tRNA uridine(34) hydroxylase (Pectobacterium carotovorum subsp. carotovorum (strain PC1)).